Reading from the N-terminus, the 313-residue chain is Ribonuclease Z (313 aa).

Zn(2+) is bound by residues H63, H65, D67, H68, H142, D212, and H270. The active-site Proton acceptor is the D67.

The protein belongs to the RNase Z family. Homodimer. It depends on Zn(2+) as a cofactor.

It carries out the reaction Endonucleolytic cleavage of RNA, removing extra 3' nucleotides from tRNA precursor, generating 3' termini of tRNAs. A 3'-hydroxy group is left at the tRNA terminus and a 5'-phosphoryl group is left at the trailer molecule.. Zinc phosphodiesterase, which displays some tRNA 3'-processing endonuclease activity. Probably involved in tRNA maturation, by removing a 3'-trailer from precursor tRNA. In Enterococcus faecalis (strain ATCC 700802 / V583), this protein is Ribonuclease Z.